A 307-amino-acid polypeptide reads, in one-letter code: Acyl transferase (307 aa).

Residues Ser-116, Asp-213, and His-243 each act as charge relay system in the active site.

Belongs to the LuxD family.

It participates in lipid metabolism; fatty acid reduction for biolumincescence. In terms of biological role, acyl transferase is part of the fatty acid reductase system required for aldehyde biosynthesis; it produces fatty acids for the luminescent reaction. The sequence is that of Acyl transferase from Photorhabdus luminescens (Xenorhabdus luminescens).